The chain runs to 804 residues: Probable exo-1,4-beta-xylosidase xlnD (804 aa).

A signal peptide spans 1–17 (MAVAALALLALLPQALG). Residues N20, N115, N139, N234, and N243 are each glycosylated (N-linked (GlcNAc...) asparagine). D307 is a catalytic residue. N349, N382, N404, N433, N444, N485, N489, N621, N652, N666, N688, and N710 each carry an N-linked (GlcNAc...) asparagine glycan.

It belongs to the glycosyl hydrolase 3 family.

It is found in the secreted. The enzyme catalyses Hydrolysis of (1-&gt;4)-beta-D-xylans, to remove successive D-xylose residues from the non-reducing termini.. It participates in glycan degradation; xylan degradation. Functionally, xylan 1,4-beta-xylosidase involved in the hydrolysis of xylan, a major structural heterogeneous polysaccharide found in plant biomass representing the second most abundant polysaccharide in the biosphere, after cellulose. The sequence is that of Probable exo-1,4-beta-xylosidase xlnD (xlnD) from Aspergillus japonicus.